Reading from the N-terminus, the 151-residue chain is Small ribosomal subunit protein eS6 (151 aa).

Belongs to the eukaryotic ribosomal protein eS6 family.

The protein is Small ribosomal subunit protein eS6 of Pyrobaculum calidifontis (strain DSM 21063 / JCM 11548 / VA1).